A 102-amino-acid chain; its full sequence is Lipopolysaccharide assembly protein A (102 aa).

At 1-2 (MK) the chain is on the cytoplasmic side. A helical transmembrane segment spans residues 3–23 (YLLIFLLVLAIFVISVTLGAQ). The Periplasmic portion of the chain corresponds to 24-43 (NDQQVTFNYLLAQGEYRIST). The helical transmembrane segment at 44–64 (LLAVLFAAGFAIGWLICGLFW) threads the bilayer. Residues 64–92 (WLRVRVSLARAERKIKRLENQLSPATDVA) are a coiled coil. The Cytoplasmic segment spans residues 65–102 (LRVRVSLARAERKIKRLENQLSPATDVAVVPHSSAAKE).

The protein belongs to the LapA family.

It localises to the cell inner membrane. Involved in the assembly of lipopolysaccharide (LPS). This Escherichia coli (strain K12) protein is Lipopolysaccharide assembly protein A.